A 239-amino-acid polypeptide reads, in one-letter code: Phosphoribosylaminoimidazole-succinocarboxamide synthase (239 aa).

This sequence belongs to the SAICAR synthetase family.

The enzyme catalyses 5-amino-1-(5-phospho-D-ribosyl)imidazole-4-carboxylate + L-aspartate + ATP = (2S)-2-[5-amino-1-(5-phospho-beta-D-ribosyl)imidazole-4-carboxamido]succinate + ADP + phosphate + 2 H(+). Its pathway is purine metabolism; IMP biosynthesis via de novo pathway; 5-amino-1-(5-phospho-D-ribosyl)imidazole-4-carboxamide from 5-amino-1-(5-phospho-D-ribosyl)imidazole-4-carboxylate: step 1/2. This Acinetobacter baylyi (strain ATCC 33305 / BD413 / ADP1) protein is Phosphoribosylaminoimidazole-succinocarboxamide synthase.